Reading from the N-terminus, the 33-residue chain is Cecropin-B (33 aa).

At Lys21 the chain carries 5-hydroxylysine.

Monomer. As to expression, hemolymph.

The protein resides in the secreted. In terms of biological role, cecropins have lytic and antibacterial activity against several Gram-positive and Gram-negative bacteria. Also has activity against fungi. The sequence is that of Cecropin-B from Heliothis virescens (Tobacco budworm moth).